The sequence spans 294 residues: Cytidine deaminase (294 aa).

CMP/dCMP-type deaminase domains are found at residues 48–168 (DEDA…FGPK) and 186–294 (LTGD…VLLG). 89–91 (NME) serves as a coordination point for substrate. Zn(2+) is bound at residue H102. E104 serves as the catalytic Proton donor. Zn(2+) is bound by residues C129 and C132.

This sequence belongs to the cytidine and deoxycytidylate deaminase family. As to quaternary structure, homodimer. The cofactor is Zn(2+).

The catalysed reaction is cytidine + H2O + H(+) = uridine + NH4(+). It carries out the reaction 2'-deoxycytidine + H2O + H(+) = 2'-deoxyuridine + NH4(+). This enzyme scavenges exogenous and endogenous cytidine and 2'-deoxycytidine for UMP synthesis. In Salmonella dublin (strain CT_02021853), this protein is Cytidine deaminase.